The chain runs to 140 residues: Organic hydroperoxide resistance protein-like 1 (140 aa).

This sequence belongs to the OsmC/Ohr family.

This is Organic hydroperoxide resistance protein-like 1 from Staphylococcus epidermidis (strain ATCC 35984 / DSM 28319 / BCRC 17069 / CCUG 31568 / BM 3577 / RP62A).